Here is a 687-residue protein sequence, read N- to C-terminus: Probable ATP-dependent RNA helicase Dbp73D (687 aa).

Disordered regions lie at residues 1–26 (MELF…TNNE) and 52–87 (TPIL…EEDV). Composition is skewed to basic and acidic residues over residues 9–18 (YTEDLKEQKD) and 54–79 (ILEK…EKPL). Positions 160 to 168 (LFPVQKQVI) match the Q motif motif. A Helicase ATP-binding domain is found at 177–381 (KPPPFRPRDI…DLRLFQPRLF (205 aa)). ATP is bound at residue 190–197 (APTGSGKT). The short motif at 305–308 (DEAD) is the DEAD box element. The 150-residue stretch at 434–583 (TVFALVEKYK…EIHVSPDIEI (150 aa)) folds into the Helicase C-terminal domain. A disordered region spans residues 646 to 675 (IVQSSKKSSETKNSKTKADKTKYQPKETKK). Residues 652 to 675 (KSSETKNSKTKADKTKYQPKETKK) are compositionally biased toward basic and acidic residues.

It belongs to the DEAD box helicase family. DDX51/DBP6 subfamily. As to expression, expressed in the germline tissue of the ovary.

It localises to the nucleus. Its subcellular location is the nucleolus. It catalyses the reaction ATP + H2O = ADP + phosphate + H(+). Its function is as follows. ATP-binding RNA helicase involved in the biogenesis of 60S ribosomal subunits. The protein is Probable ATP-dependent RNA helicase Dbp73D (Dbp73D) of Drosophila melanogaster (Fruit fly).